We begin with the raw amino-acid sequence, 117 residues long: Ribonuclease P protein component (117 aa).

It belongs to the RnpA family. As to quaternary structure, consists of a catalytic RNA component (M1 or rnpB) and a protein subunit.

It catalyses the reaction Endonucleolytic cleavage of RNA, removing 5'-extranucleotides from tRNA precursor.. Functionally, RNaseP catalyzes the removal of the 5'-leader sequence from pre-tRNA to produce the mature 5'-terminus. It can also cleave other RNA substrates such as 4.5S RNA. The protein component plays an auxiliary but essential role in vivo by binding to the 5'-leader sequence and broadening the substrate specificity of the ribozyme. The protein is Ribonuclease P protein component of Lactococcus lactis subsp. cremoris (strain MG1363).